The primary structure comprises 179 residues: Protein GrpE (179 aa).

The tract at residues 1–20 (MSEETKEEIKNEKVDEEVTE) is disordered.

It belongs to the GrpE family. As to quaternary structure, homodimer.

The protein resides in the cytoplasm. Its function is as follows. Participates actively in the response to hyperosmotic and heat shock by preventing the aggregation of stress-denatured proteins, in association with DnaK and GrpE. It is the nucleotide exchange factor for DnaK and may function as a thermosensor. Unfolded proteins bind initially to DnaJ; upon interaction with the DnaJ-bound protein, DnaK hydrolyzes its bound ATP, resulting in the formation of a stable complex. GrpE releases ADP from DnaK; ATP binding to DnaK triggers the release of the substrate protein, thus completing the reaction cycle. Several rounds of ATP-dependent interactions between DnaJ, DnaK and GrpE are required for fully efficient folding. This Lactococcus lactis subsp. lactis (strain IL1403) (Streptococcus lactis) protein is Protein GrpE.